Consider the following 133-residue polypeptide: Holo-[acyl-carrier-protein] synthase (133 aa).

Mg(2+) contacts are provided by D8 and E64.

Belongs to the P-Pant transferase superfamily. AcpS family. The cofactor is Mg(2+).

The protein resides in the cytoplasm. The catalysed reaction is apo-[ACP] + CoA = holo-[ACP] + adenosine 3',5'-bisphosphate + H(+). Functionally, transfers the 4'-phosphopantetheine moiety from coenzyme A to a Ser of acyl-carrier-protein. The protein is Holo-[acyl-carrier-protein] synthase of Shewanella loihica (strain ATCC BAA-1088 / PV-4).